We begin with the raw amino-acid sequence, 293 residues long: Oxidoreductase clz16 (293 aa).

It belongs to the asaB hydroxylase/desaturase family.

It participates in secondary metabolite biosynthesis. Functionally, oxidoreductase; part of the gene cluster that mediates the biosynthesis of squalestatin S1 (SQS1, also known as zaragozic acid A), a heavily oxidized fungal polyketide that offers potent cholesterol lowering activity by targeting squalene synthase (SS). SQS1 is composed of a 2,8-dioxobicyclic[3.2.1]octane-3,4,5-tricarboxyclic acid core that is connected to two lipophilic polyketide arms. These initial steps feature the priming of an unusual benzoic acid starter unit onto the highly reducing polyketide synthase clz14, followed by oxaloacetate extension and product release to generate a tricarboxylic acid containing product. The phenylalanine ammonia lyase (PAL) clz10 and the acyl-CoA ligase clz12 are involved in transforming phenylalanine into benzoyl-CoA. The citrate synthase-like protein clz17 is involved in connecting the C-alpha-carbons of the hexaketide chain and oxaloacetate to afford the tricarboxylic acid unit. The potential hydrolytic enzymes, clz11 and clz13, are in close proximity to pks2 and may participate in product release. On the other side, the tetraketide arm is synthesized by a the squalestatin tetraketide synthase clz2 and enzymatically esterified to the core in the last biosynthetic step, by the acetyltransferase clz6. The biosynthesis of the tetraketide must involve 3 rounds of chain extension. After the first and second rounds methyl-transfer occurs, and in all rounds of extension the ketoreductase and dehydratase are active. The enoyl reductase and C-MeT of clz2 are not active in the final round of extension. The acetyltransferase clz6 appears to have a broad substrate selectivity for its acyl CoA substrate, allowing the in vitro synthesis of novel squalestatins. The biosynthesis of SQS1 requires several oxidative steps likely performed by oxidoreductases clz3, clz15 and clz16. Finally, in support of the identification of the cluster as being responsible for SQS1 production, the cluster contains a gene encoding a putative squalene synthase (SS) clz20, suggesting a likely mechanism for self-resistance. This chain is Oxidoreductase clz16, found in Cochliobolus lunatus (Filamentous fungus).